The chain runs to 313 residues: Cytochrome c biogenesis protein CcsA (313 aa).

The next 8 helical transmembrane spans lie at 13–35 (ISFSIISIVITTHLMTFAREIAG), 43–63 (GMIAVFLRITGLLVTRWIYSG), 67–87 (LSNLYESLIFLSWGFSLIHMI), 96–116 (FLSSITAPSAILTQGFVTSGL), 142–162 (MLLSYAALLCGSLLSIALLVI), 219–239 (VIGIGFTLLTLGILSGAVWAN), 252–269 (ETWAFITWTISAIYLHTR), and 280–300 (AIVASIGFLIIWICYFGVNLL).

Belongs to the CcmF/CycK/Ccl1/NrfE/CcsA family. As to quaternary structure, may interact with Ccs1.

Its subcellular location is the plastid. It is found in the chloroplast thylakoid membrane. Its function is as follows. Required during biogenesis of c-type cytochromes (cytochrome c6 and cytochrome f) at the step of heme attachment. This is Cytochrome c biogenesis protein CcsA from Amborella trichopoda.